Consider the following 271-residue polypeptide: Effector CFEM6 (271 aa).

The first 17 residues, 1-17 (MKYSMITLGAFAMMAVA), serve as a signal peptide directing secretion. Residues 18-111 (QLSSLPACGQ…LGPATAVVAS (94 aa)) enclose the CFEM domain. Cystine bridges form between cysteine 25–cysteine 68, cysteine 29–cysteine 63, cysteine 42–cysteine 49, and cysteine 51–cysteine 84. Heme is bound at residue aspartate 46. Residue serine 247 is the site of GPI-anchor amidated serine attachment. Residues 248–271 (SAGGARQTAFAGLAAAAGFAAIIL) constitute a propeptide, removed in mature form.

Belongs to the RBT5 family.

The protein resides in the cell membrane. Its subcellular location is the secreted. The protein localises to the host nucleus. It localises to the host cell membrane. It is found in the host chloroplast envelope. Its function is as follows. Appears to function during host infection, and may play a role in suppressing the host immune response. In Marssonina brunnea f. sp. multigermtubi (strain MB_m1) (Marssonina leaf spot fungus), this protein is Effector CFEM6.